We begin with the raw amino-acid sequence, 588 residues long: Aspartate--tRNA ligase (588 aa).

Glu174 contacts L-aspartate. Residues 198 to 201 (QLFK) form an aspartate region. Arg220 contacts L-aspartate. Residues 220–222 (RDE) and Gln229 each bind ATP. Position 448 (His448) interacts with L-aspartate. Glu482 contributes to the ATP binding site. Arg489 contributes to the L-aspartate binding site. Residue 534–537 (GIDR) participates in ATP binding.

It belongs to the class-II aminoacyl-tRNA synthetase family. Type 1 subfamily. As to quaternary structure, homodimer.

Its subcellular location is the cytoplasm. It carries out the reaction tRNA(Asp) + L-aspartate + ATP = L-aspartyl-tRNA(Asp) + AMP + diphosphate. In terms of biological role, catalyzes the attachment of L-aspartate to tRNA(Asp) in a two-step reaction: L-aspartate is first activated by ATP to form Asp-AMP and then transferred to the acceptor end of tRNA(Asp). This chain is Aspartate--tRNA ligase, found in Xanthomonas euvesicatoria pv. vesicatoria (strain 85-10) (Xanthomonas campestris pv. vesicatoria).